Reading from the N-terminus, the 1028-residue chain is Contactin-3 (1028 aa).

The first 19 residues, 1-19 (MMFPWKQLILLSFIGCLGG), serve as a signal peptide directing secretion. 6 consecutive Ig-like C2-type domains span residues 26–117 (PVFI…AKLQ), 122–208 (ENFK…ARVL), 227–313 (PKIE…GRLT), 318–402 (PHWV…AELK), 408–497 (PDFS…LVVT), and 499–593 (PTRI…ADLI). 5 cysteine pairs are disulfide-bonded: cysteine 50–cysteine 100, cysteine 144–cysteine 196, cysteine 249–cysteine 297, cysteine 339–cysteine 386, and cysteine 431–cysteine 479. Asparagine 65 and asparagine 193 each carry an N-linked (GlcNAc...) asparagine glycan. Residues asparagine 375, asparagine 468, and asparagine 489 are each glycosylated (N-linked (GlcNAc...) asparagine). A disulfide bridge connects residues cysteine 521 and cysteine 577. 4 consecutive Fibronectin type-III domains span residues 600 to 698 (PPEN…TEEA), 703 to 800 (PPSE…SAEE), 805 to 901 (APSQ…TKKT), and 902 to 998 (PPSQ…TSMD). The disordered stretch occupies residues 684–713 (GEPSLPSEKVRTEEAVPEVPPSEVNGGGGS). N-linked (GlcNAc...) asparagine glycans are attached at residues asparagine 765, asparagine 860, asparagine 895, asparagine 913, asparagine 931, and asparagine 956. Serine 1002 carries the GPI-anchor amidated serine lipid modification. The propeptide at 1003-1028 (TSAISNVHPMSSYMPIVLFLIVYVLW) is removed in mature form.

This sequence belongs to the immunoglobulin superfamily. Contactin family. Interacts with PTPRG. In terms of tissue distribution, in brain, it is expressed in frontal lobe, occipital lobe, cerebellum and amygdala.

The protein localises to the cell membrane. Its function is as follows. Contactins mediate cell surface interactions during nervous system development. Has some neurite outgrowth-promoting activity. This chain is Contactin-3 (CNTN3), found in Homo sapiens (Human).